A 449-amino-acid chain; its full sequence is Exodeoxyribonuclease 7 large subunit (449 aa).

Belongs to the XseA family. In terms of assembly, heterooligomer composed of large and small subunits.

The protein resides in the cytoplasm. It catalyses the reaction Exonucleolytic cleavage in either 5'- to 3'- or 3'- to 5'-direction to yield nucleoside 5'-phosphates.. Its function is as follows. Bidirectionally degrades single-stranded DNA into large acid-insoluble oligonucleotides, which are then degraded further into small acid-soluble oligonucleotides. The sequence is that of Exodeoxyribonuclease 7 large subunit from Lacticaseibacillus paracasei (strain ATCC 334 / BCRC 17002 / CCUG 31169 / CIP 107868 / KCTC 3260 / NRRL B-441) (Lactobacillus paracasei).